A 375-amino-acid chain; its full sequence is V-type proton ATPase subunit C (375 aa).

Belongs to the V-ATPase C subunit family. V-ATPase is a heteromultimeric enzyme composed of a peripheral catalytic V1 complex (components A to H) attached to an integral membrane V0 proton pore complex (components: a, c, c'', d and e). Post-translationally, phosphorylated on Ser/Thr residues by WNK8.

The protein resides in the vacuole membrane. Subunit of the peripheral V1 complex of vacuolar ATPase. Subunit C is necessary for the assembly of the catalytic sector of the enzyme and is likely to have a specific function in its catalytic activity. V-ATPase is responsible for acidifying a variety of intracellular compartments in eukaryotic cells. This is V-type proton ATPase subunit C (VHA-C) from Arabidopsis thaliana (Mouse-ear cress).